Here is a 407-residue protein sequence, read N- to C-terminus: Zinc finger protein 260 (407 aa).

Disordered regions lie at residues 1–21 (MLESLQPESHLLHDEPDPGES), 39–72 (VEHKKTHSGEKSPECTGCGEESSQASSLTLHLRS), and 96–124 (SHQKQHTEERPSESKKTPVPMTTTVRNQR). A C2H2-type 1 zinc finger spans residues 23–45 (YECNECKETFSLEQNFVEHKKTH). 2 stretches are compositionally biased toward basic and acidic residues: residues 39 to 51 (VEHKKTHSGEKSP) and 100 to 111 (QHTEERPSESKK). The segment at 51–73 (PECTGCGEESSQASSLTLHLRSR) adopts a C2H2-type 2; degenerate zinc-finger fold. A C2H2-type 3 zinc finger spans residues 79–101 (YKCGECGKAFSQRGNFLSHQKQH). Polar residues predominate over residues 115–124 (PMTTTVRNQR). 10 consecutive C2H2-type zinc fingers follow at residues 131 to 153 (YACKECGKAFNGKSYLKEHEKIH), 159 to 181 (FECSQCGRAFSQKQYLIKHQNIH), 187 to 209 (FKCNECGKAFSQKENLIIHQRIH), 215 to 237 (YECKGCGKAFIQKSSLIRHQRSH), 243 to 265 (YTCKECGKAFSGKSNLTEHEKIH), 271 to 293 (YKCNECGTIFRQKQYLIKHHNIH), 299 to 321 (YECNKCGKAFSRITSLIVHVRIH), 327 to 349 (YECKICGKAFCQSSSLTVHMRSH), 355 to 377 (YGCNECGKAFSQFSTLALHMRIH), and 383 to 405 (YQCSECGKAFSQKSHHIRHQRIH).

The protein belongs to the krueppel C2H2-type zinc-finger protein family. In terms of assembly, binds DNA. Interacts with GATA4. In terms of tissue distribution, predominantly present in heart. Outside the heart, it is detected in embryonic and postnatal vascular smooth muscle cells and in epithelial cells of the lung, gut and kidney at sites of epithelial morphogenesis and in the spinal cord (at protein level).

The protein localises to the nucleus. Transcription factor that acts as a cardiac regulator and an effector of alpha1-adrenergic signaling. Binds to PE response elements (PERE) present in the promoter of genes such as ANF/NPPA and acts as a direct transcriptional activator of NPPA. Also acts as a cofactor with GATA4, a key cardiac regulator. The polypeptide is Zinc finger protein 260 (Znf260) (Mus musculus (Mouse)).